Consider the following 403-residue polypeptide: Phosphopentomutase (403 aa).

Mn(2+)-binding residues include Asp13, Asp298, His303, Asp339, His340, and His351.

It belongs to the phosphopentomutase family. Requires Mn(2+) as cofactor.

The protein localises to the cytoplasm. It catalyses the reaction 2-deoxy-alpha-D-ribose 1-phosphate = 2-deoxy-D-ribose 5-phosphate. It carries out the reaction alpha-D-ribose 1-phosphate = D-ribose 5-phosphate. Its pathway is carbohydrate degradation; 2-deoxy-D-ribose 1-phosphate degradation; D-glyceraldehyde 3-phosphate and acetaldehyde from 2-deoxy-alpha-D-ribose 1-phosphate: step 1/2. Functionally, isomerase that catalyzes the conversion of deoxy-ribose 1-phosphate (dRib-1-P) and ribose 1-phosphate (Rib-1-P) to deoxy-ribose 5-phosphate (dRib-5-P) and ribose 5-phosphate (Rib-5-P), respectively. In Streptococcus equi subsp. zooepidemicus (strain H70), this protein is Phosphopentomutase.